Consider the following 301-residue polypeptide: Outer membrane porin G (301 aa).

The first 21 residues, 1 to 21 (MKKLLPCTALVMCAGMACAQA), serve as a signal peptide directing secretion. 16 consecutive transmembrane segments (beta stranded) span residues 27 to 35 (WHFNIGAMY), 47 to 57 (MDGLAEPSVYF), 64 to 72 (WRIALAYYQ), 89 to 98 (RPELEVHYQF), 104 to 112 (FSFGLTGGF), 129 to 136 (NMQRWKIA), 149 to 158 (FNGWLSMYKF), 172 to 182 (VETETGLQYTF), 186 to 195 (VALRVNYYLE), 201 to 209 (DDSRNNGEF), 213 to 222 (EIRAYLPLTL), 230 to 238 (YTRIGLDRW), 240 to 248 (NWDWQDDIE), 254 to 265 (FNRVGLFYGYDF), 269 to 279 (LSVSLEYAFEW), and 289 to 300 (KFHYAGVGVNYS).

As to quaternary structure, monomer.

The protein resides in the cell outer membrane. Functionally, forms channels functionally larger than those of classical porins. Its function is as follows. May act as a regulator of the RCS-phosphorelay signal transduction pathway. This Escherichia coli (strain K12) protein is Outer membrane porin G (ompG).